The sequence spans 326 residues: Pyruvate dehydrogenase E1 component subunit alpha (326 aa).

Heterodimer of an alpha and a beta chain. Thiamine diphosphate is required as a cofactor.

It carries out the reaction N(6)-[(R)-lipoyl]-L-lysyl-[protein] + pyruvate + H(+) = N(6)-[(R)-S(8)-acetyldihydrolipoyl]-L-lysyl-[protein] + CO2. In terms of biological role, the pyruvate dehydrogenase complex catalyzes the overall conversion of pyruvate to acetyl-CoA and CO(2). It contains multiple copies of three enzymatic components: pyruvate dehydrogenase (E1), dihydrolipoamide acetyltransferase (E2) and lipoamide dehydrogenase (E3). This chain is Pyruvate dehydrogenase E1 component subunit alpha (pdhA), found in Rickettsia bellii (strain RML369-C).